We begin with the raw amino-acid sequence, 381 residues long: Succinyl-diaminopimelate desuccinylase (381 aa).

A Zn(2+)-binding site is contributed by histidine 69. Aspartate 71 is a catalytic residue. Aspartate 103 contributes to the Zn(2+) binding site. Glutamate 137 acts as the Proton acceptor in catalysis. Zn(2+)-binding residues include glutamate 138, glutamate 166, and histidine 355.

Belongs to the peptidase M20A family. DapE subfamily. Homodimer. Requires Zn(2+) as cofactor. The cofactor is Co(2+).

The catalysed reaction is N-succinyl-(2S,6S)-2,6-diaminopimelate + H2O = (2S,6S)-2,6-diaminopimelate + succinate. Its pathway is amino-acid biosynthesis; L-lysine biosynthesis via DAP pathway; LL-2,6-diaminopimelate from (S)-tetrahydrodipicolinate (succinylase route): step 3/3. Its function is as follows. Catalyzes the hydrolysis of N-succinyl-L,L-diaminopimelic acid (SDAP), forming succinate and LL-2,6-diaminopimelate (DAP), an intermediate involved in the bacterial biosynthesis of lysine and meso-diaminopimelic acid, an essential component of bacterial cell walls. The sequence is that of Succinyl-diaminopimelate desuccinylase from Rickettsia akari (strain Hartford).